The sequence spans 470 residues: Ribosomal protein uS12 methylthiotransferase RimO (470 aa).

An MTTase N-terminal domain is found at 20 to 131; sequence PTVAFAHLGC…IVEVLQQVEA (112 aa). [4Fe-4S] cluster contacts are provided by Cys29, Cys65, Cys94, Cys169, Cys173, and Cys176. Positions 155–384 constitute a Radical SAM core domain; the sequence is TTGEAVAYLK…MTLQQPISAA (230 aa). One can recognise a TRAM domain in the interval 387–458; the sequence is ASWIGKTVDV…IYDLSGHVVS (72 aa).

The protein belongs to the methylthiotransferase family. RimO subfamily. [4Fe-4S] cluster serves as cofactor.

The protein resides in the cytoplasm. It carries out the reaction L-aspartate(89)-[ribosomal protein uS12]-hydrogen + (sulfur carrier)-SH + AH2 + 2 S-adenosyl-L-methionine = 3-methylsulfanyl-L-aspartate(89)-[ribosomal protein uS12]-hydrogen + (sulfur carrier)-H + 5'-deoxyadenosine + L-methionine + A + S-adenosyl-L-homocysteine + 2 H(+). Catalyzes the methylthiolation of an aspartic acid residue of ribosomal protein uS12. The chain is Ribosomal protein uS12 methylthiotransferase RimO from Synechococcus sp. (strain CC9311).